The primary structure comprises 387 residues: V-set and immunoglobulin domain-containing protein 1 (387 aa).

The first 21 residues, 1–21, serve as a signal peptide directing secretion; it reads MVFAFWKVFLILSCLAGQVSV. Positions 22–132 constitute an Ig-like V-type domain; sequence VQVTIPDGFV…DFLGQNQGIL (111 aa). Residues 22 to 232 lie on the Extracellular side of the membrane; that stretch reads VQVTIPDGFV…EIDLTSSHPE (211 aa). N-linked (GlcNAc...) asparagine glycosylation is found at Asn32 and Asn38. Cysteines 43 and 116 form a disulfide. Asn133, Asn200, and Asn219 each carry an N-linked (GlcNAc...) asparagine glycan. Positions 140-227 constitute an Ig-like C2-type domain; that stretch reads PSKPLCSVQG…GNSSCEIDLT (88 aa). An intrachain disulfide couples Cys161 to Cys211. Residues 233 to 253 form a helical membrane-spanning segment; sequence VGIIVGALIGSLVGAAIIISV. Topologically, residues 254-387 are cytoplasmic; that stretch reads VCFARNKAKA…SEDEKGVVKA (134 aa). Positions 266–387 are disordered; that stretch reads KERNSKTIAE…SEDEKGVVKA (122 aa). Residues 284–296 are compositionally biased toward basic and acidic residues; sequence PRGESEAMPREDA. The span at 299–308 shows a compositional bias: polar residues; sequence LEVTLPSSIH. Residues 325–335 show a composition bias toward pro residues; that stretch reads TQEPAPEPAPG. Over residues 344 to 368 the composition is skewed to acidic residues; the sequence is LDIELELEPETQSELEPEPEPEPES.

Highly N-glycosylated. Appears not to contain significant amounts of O-linked carbohydrates or sialic acid in its sugar moieties. Detected only in stomach mucosa and testis, and to a much lesser level in pancreas (at protein level). Detected in gastric cancers (31%), esophageal carcinomas (50%) and ovarian cancers (23%).

It is found in the membrane. The chain is V-set and immunoglobulin domain-containing protein 1 (VSIG1) from Homo sapiens (Human).